The primary structure comprises 96 residues: Putative regulatory protein DET0036 (96 aa).

This sequence belongs to the RemA family.

The protein is Putative regulatory protein DET0036 of Dehalococcoides mccartyi (strain ATCC BAA-2266 / KCTC 15142 / 195) (Dehalococcoides ethenogenes (strain 195)).